The following is a 487-amino-acid chain: L-tartrate/succinate antiporter (487 aa).

The next 14 membrane-spanning stretches (helical) occupy residues 10–30 (YLAP…AGLE), 33–53 (TWLY…EPVP), 54–74 (GAVV…WLLF), 93–113 (WAVS…FMFG), 137–157 (TLFL…VTPS), 189–209 (IGSY…AIFL), 236–256 (FLGM…LAYV), 292–312 (LMVG…AAMV), 313–333 (GYSV…DIVS), 340–360 (VFFW…TGFI), 370–390 (SLSG…FYLL), 393–413 (FFAS…AAAL), 418–438 (IPLP…SILT), and 465–485 (IFGL…MPVV).

This sequence belongs to the SLC13A/DASS transporter (TC 2.A.47) family. DIT1 subfamily.

The protein resides in the cell inner membrane. It carries out the reaction (2R,3R)-tartrate(out) + succinate(in) = (2R,3R)-tartrate(in) + succinate(out). Its function is as follows. Catalyzes the uptake of tartrate in exchange for intracellular succinate. Essential for anaerobic L-tartrate fermentation. This chain is L-tartrate/succinate antiporter (ttdT), found in Escherichia coli O6:K15:H31 (strain 536 / UPEC).